Here is a 253-residue protein sequence, read N- to C-terminus: Ditrans,polycis-undecaprenyl-diphosphate synthase ((2E,6E)-farnesyl-diphosphate specific) (253 aa).

The active site involves Asp-25. Mg(2+) is bound at residue Asp-25. Substrate is bound by residues 26-29, Trp-30, Arg-38, His-42, and 70-72; these read GNGR and SSE. Residue Asn-73 is the Proton acceptor of the active site. Positions 74, 76, and 193 each coordinate substrate. His-198 is a binding site for Mg(2+). Residue 199–201 coordinates substrate; the sequence is RIS. Mg(2+) is bound at residue Glu-212.

This sequence belongs to the UPP synthase family. As to quaternary structure, homodimer. The cofactor is Mg(2+).

It carries out the reaction 8 isopentenyl diphosphate + (2E,6E)-farnesyl diphosphate = di-trans,octa-cis-undecaprenyl diphosphate + 8 diphosphate. Its function is as follows. Catalyzes the sequential condensation of isopentenyl diphosphate (IPP) with (2E,6E)-farnesyl diphosphate (E,E-FPP) to yield (2Z,6Z,10Z,14Z,18Z,22Z,26Z,30Z,34E,38E)-undecaprenyl diphosphate (di-trans,octa-cis-UPP). UPP is the precursor of glycosyl carrier lipid in the biosynthesis of bacterial cell wall polysaccharide components such as peptidoglycan and lipopolysaccharide. The chain is Ditrans,polycis-undecaprenyl-diphosphate synthase ((2E,6E)-farnesyl-diphosphate specific) from Pectobacterium atrosepticum (strain SCRI 1043 / ATCC BAA-672) (Erwinia carotovora subsp. atroseptica).